Consider the following 648-residue polypeptide: Threonine--tRNA ligase (648 aa).

A TGS domain is found at 1–61; the sequence is MIDIILPDGS…INTATVKAIT (61 aa). A catalytic region spans residues 243-549; it reads DHRKLGRELE…LIEHYSGRLP (307 aa). Zn(2+)-binding residues include C349, H400, and H526.

Belongs to the class-II aminoacyl-tRNA synthetase family. In terms of assembly, homodimer. Requires Zn(2+) as cofactor.

The protein resides in the cytoplasm. The catalysed reaction is tRNA(Thr) + L-threonine + ATP = L-threonyl-tRNA(Thr) + AMP + diphosphate + H(+). Catalyzes the attachment of threonine to tRNA(Thr) in a two-step reaction: L-threonine is first activated by ATP to form Thr-AMP and then transferred to the acceptor end of tRNA(Thr). Also edits incorrectly charged L-seryl-tRNA(Thr). This Orientia tsutsugamushi (strain Boryong) (Rickettsia tsutsugamushi) protein is Threonine--tRNA ligase.